A 544-amino-acid polypeptide reads, in one-letter code: Chaperonin GroEL (544 aa).

Residues 29 to 32 (TLGP), 86 to 90 (DGTTT), G413, 476 to 478 (NAA), and D492 contribute to the ATP site.

The protein belongs to the chaperonin (HSP60) family. Forms a cylinder of 14 subunits composed of two heptameric rings stacked back-to-back. Interacts with the co-chaperonin GroES.

It localises to the cytoplasm. The protein localises to the secreted. It carries out the reaction ATP + H2O + a folded polypeptide = ADP + phosphate + an unfolded polypeptide.. In terms of biological role, together with its co-chaperonin GroES, plays an essential role in assisting protein folding. The GroEL-GroES system forms a nano-cage that allows encapsulation of the non-native substrate proteins and provides a physical environment optimized to promote and accelerate protein folding. The protein is Chaperonin GroEL of Bacillus subtilis (strain 168).